The following is a 283-amino-acid chain: K88 fimbrial protein AC (283 aa).

The first 21 residues, 1-21 (MKKTLIALAIAASAASGMAHA), serve as a signal peptide directing secretion.

Belongs to the fimbrial K88 protein family. K88 fimbria, 0.1-1 micrometer in length and 7 nanometers in diameter, is composed of about 100 identical subunits.

The protein localises to the fimbrium. In terms of biological role, K88 major fimbrial subunit. Fimbriae (also called pili), are polar filaments radiating from the surface of the bacterium to a length of 0.5-1.5 micrometers and numbering 100-300 per cell. They enable bacteria to colonize the epithelium of specific host organs. The sequence is that of K88 fimbrial protein AC (faeG) from Escherichia coli.